A 257-amino-acid polypeptide reads, in one-letter code: Beta-fibrinogenase (257 aa).

A signal peptide spans 1–18 (MVLIRVLANLLLLQLSHA). A propeptide spanning residues 19–24 (QKSSEL) is cleaved from the precursor. A Peptidase S1 domain is found at 25–248 (VVGGDECNIN…YTDWIQSIIA (224 aa)). Disulfide bonds link Cys31–Cys162, Cys49–Cys65, Cys97–Cys255, Cys141–Cys209, Cys173–Cys188, and Cys199–Cys224. The N-linked (GlcNAc...) asparagine glycan is linked to Asn44. Residue His64 is the Charge relay system of the active site. Residues Asn78 and Asn102 are each glycosylated (N-linked (GlcNAc...) asparagine). Catalysis depends on Asp109, which acts as the Charge relay system. 2 N-linked (GlcNAc...) asparagine glycosylation sites follow: Asn153 and Asn169. Ser203 (charge relay system) is an active-site residue. A glycan (N-linked (GlcNAc...) asparagine) is linked at Asn250.

As to quaternary structure, monomer. In terms of processing, glycosylated. Contains 23.0% of hexoses, 8.3% of hexosamines and 1.0% of sialic acids. In terms of tissue distribution, expressed by the venom gland.

It localises to the secreted. Its activity is regulated as follows. Inhibited by diisopropylfluorophosphate (DFP) and PMSF. Snake venom serine protease that has fibrinogenolytic activities by hydrolyzing the beta chain of fibrinogen (FGB). Typical arginine esterase which hydrolyzes esters and amides of arginine. The sequence is that of Beta-fibrinogenase from Macrovipera lebetinus (Levantine viper).